Here is a 914-residue protein sequence, read N- to C-terminus: MSRFFTTGSDSESESSLSGEELVTKPVGGNYGKQPLLLSEDEEDTKRVVRSAKDKRFEELTNLIRTIRNAMKIRDVTKCLEEFELLGKAYGKAKSIVDKEGVPRFYIRILADLEDYLNELWEDKEGKKKMNKNNAKALSTLRQKIRKYNRDFESHITSYKQNPEQSADEDAEKNEEDSEGSSDEDEDEDGVSAATFLKKKSEAPSGESRKFLKKMDDEDEDSEDSEDDEDWDTGSTSSDSDSEEEEGKQTALASRFLKKAPTTDEDKKAAEKKREDKAKKKHDRKSKRLDEEEEEDNEGGEWERVRGGVPLVKEKPKMFAKGTEITHAVVIKKLNEILQARGKKGTDRAAQIELLQLLVQIAAENNLGEGVIVKIKFNIIASLYDYNPNLATYMKPEMWGKCLDCINELMDILFANPNIFVGENILEESENLHNADQPLRVRGCILTLVERMDEEFTKIMQNTDPHSQEYVEHLKDEAQVCAIIERVQRYLEEKGTTEEVCRIYLLRILHTYYKFDYKAHQRQLTPPEGSSKSEQDQAENEGEDSAVLMERLCKYIYAKDRTDRIRTCAILCHIYHHALHSRWYQARDLMLMSHLQDNIQHADPPVQILYNRTMVQLGICAFRQGLTKDAHNALLDIQSSGRAKELLGQGLLLRSLQERNQEQEKVERRRQVPFHLHINLELLECVYLVSAMLLEIPYMAAHESDARRRMISKQFHHQLRVGERQPLLGPPESMREHVVAASKAMKMGDWKTCHSFIINEKMNGKVWDLFPEADKVRTMLVRKIQEESLRTYLFTYSSVYDSISMETLSDMFELDLPTVHSIISKMIINEELMASLDQPTQTVVMHRTEPTAQQNLALQLAEKLGSLVENNERVFDHKQGTYGGYFRDQKDGYRKNEGYMRRGGYRQQQSQTAY.

The tract at residues 1-44 (MSRFFTTGSDSESESSLSGEELVTKPVGGNYGKQPLLLSEDEED) is disordered. Residues 8–21 (GSDSESESSLSGEE) show a composition bias toward low complexity. 7 positions are modified to phosphoserine: Ser-9, Ser-11, Ser-13, Ser-15, Ser-16, Ser-18, and Ser-39. At Lys-99 the chain carries N6-acetyllysine. 2 disordered regions span residues 157 to 302 (TSYK…GGEW) and 523 to 543 (QLTP…NEGE). 4 positions are modified to phosphoserine: Ser-166, Ser-178, Ser-181, and Ser-182. The segment covering 166–190 (SADEDAEKNEEDSEGSSDEDEDEDG) has biased composition (acidic residues). Positions 199–216 (KKSEAPSGESRKFLKKMD) are enriched in basic and acidic residues. Acidic residues predominate over residues 217 to 232 (DEDEDSEDSEDDEDWD). Basic and acidic residues predominate over residues 261 to 278 (PTTDEDKKAAEKKREDKA). The segment covering 291–300 (EEEEEDNEGG) has biased composition (acidic residues). Positions 523–532 (QLTPPEGSSK) are enriched in polar residues. Position 525 is a phosphothreonine (Thr-525). Lys-644 is subject to N6-acetyllysine. The PCI domain maps to 674-850 (FHLHINLELL…QTVVMHRTEP (177 aa)). The interval 886–914 (FRDQKDGYRKNEGYMRRGGYRQQQSQTAY) is disordered. The span at 887–900 (RDQKDGYRKNEGYM) shows a compositional bias: basic and acidic residues. A Phosphoserine modification is found at Ser-910.

Belongs to the eIF-3 subunit C family. As to quaternary structure, component of the eukaryotic translation initiation factor 3 (eIF-3) complex, which is composed of 13 subunits: EIF3A, EIF3B, EIF3C, EIF3D, EIF3E, EIF3F, EIF3G, EIF3H, EIF3I, EIF3J, EIF3K, EIF3L and EIF3M. The eIF-3 complex appears to include 3 stable modules: module A is composed of EIF3A, EIF3B, EIF3G and EIF3I; module B is composed of EIF3F, EIF3H, and EIF3M; and module C is composed of EIF3C, EIF3D, EIF3E, EIF3K and EIF3L. EIF3C of module C binds EIF3B of module A and EIF3H of module B, thereby linking the three modules. EIF3J is a labile subunit that binds to the eIF-3 complex via EIF3B. The eIF-3 complex interacts with RPS6KB1 under conditions of nutrient depletion. Mitogenic stimulation leads to binding and activation of a complex composed of MTOR and RPTOR, leading to phosphorylation and release of RPS6KB1 and binding of EIF4B to eIF-3. Post-translationally, phosphorylated. Phosphorylation is enhanced upon serum stimulation.

The protein localises to the cytoplasm. In terms of biological role, component of the eukaryotic translation initiation factor 3 (eIF-3) complex, which is required for several steps in the initiation of protein synthesis. The eIF-3 complex associates with the 40S ribosome and facilitates the recruitment of eIF-1, eIF-1A, eIF-2:GTP:methionyl-tRNAi and eIF-5 to form the 43S pre-initiation complex (43S PIC). The eIF-3 complex stimulates mRNA recruitment to the 43S PIC and scanning of the mRNA for AUG recognition. The eIF-3 complex is also required for disassembly and recycling of post-termination ribosomal complexes and subsequently prevents premature joining of the 40S and 60S ribosomal subunits prior to initiation. The eIF-3 complex specifically targets and initiates translation of a subset of mRNAs involved in cell proliferation, including cell cycling, differentiation and apoptosis, and uses different modes of RNA stem-loop binding to exert either translational activation or repression. The sequence is that of Eukaryotic translation initiation factor 3 subunit C-like protein (EIF3CL) from Homo sapiens (Human).